The chain runs to 528 residues: Probable methylmalonate-semialdehyde/malonate-semialdehyde dehydrogenase [acylating], mitochondrial (528 aa).

A mitochondrion-targeting transit peptide spans 1-26 (MLSFKFAKSASKVIGNRNFHSSSASL). The NAD(+) site is built by Phe175, Lys199, Glu202, and Arg203. Cys307 functions as the Nucleophile in the catalytic mechanism. Position 408 (Glu408) interacts with NAD(+).

The protein belongs to the aldehyde dehydrogenase family. In terms of assembly, homotetramer.

Its subcellular location is the mitochondrion. It carries out the reaction 2-methyl-3-oxopropanoate + NAD(+) + CoA + H2O = propanoyl-CoA + hydrogencarbonate + NADH + H(+). The catalysed reaction is 3-oxopropanoate + NAD(+) + CoA + H2O = hydrogencarbonate + acetyl-CoA + NADH + H(+). Its function is as follows. Probable malonate and methylmalonate semialdehyde dehydrogenase involved in the catabolism of valine, thymine, and compounds catabolized by way of beta-alanine, including uracil and cytidine. The chain is Probable methylmalonate-semialdehyde/malonate-semialdehyde dehydrogenase [acylating], mitochondrial (mmsdh) from Dictyostelium discoideum (Social amoeba).